Reading from the N-terminus, the 226-residue chain is Thioredoxin domain-containing protein 9 (226 aa).

One can recognise a Thioredoxin domain in the interval 75-180 (EIGSERDFFQ…TTETLEWRLG (106 aa)). S188, S221, and S223 each carry phosphoserine.

As to quaternary structure, forms ternary complexes with the chaperonin TCP1 complex, spanning the cylindrical chaperonin cavity and contacting at least 2 subunits. Expressed in testis, liver, heart, kidney, brain, spleen and lung.

The protein localises to the cytoplasm. Its subcellular location is the nucleus. It is found in the cytoskeleton. It localises to the microtubule organizing center. The protein resides in the centrosome. The protein localises to the midbody. Significantly diminishes the chaperonin TCP1 complex ATPase activity, thus negatively impacts protein folding, including that of actin or tubulin. In Mus musculus (Mouse), this protein is Thioredoxin domain-containing protein 9 (Txndc9).